Reading from the N-terminus, the 251-residue chain is uncharacterized protein (251 aa).

It belongs to the FAM243 family.

This is an uncharacterized protein from Bos taurus (Bovine).